We begin with the raw amino-acid sequence, 284 residues long: Bifunctional protein FolD (284 aa).

166 to 168 (GAS) is an NADP(+) binding site.

This sequence belongs to the tetrahydrofolate dehydrogenase/cyclohydrolase family. Homodimer.

It catalyses the reaction (6R)-5,10-methylene-5,6,7,8-tetrahydrofolate + NADP(+) = (6R)-5,10-methenyltetrahydrofolate + NADPH. The catalysed reaction is (6R)-5,10-methenyltetrahydrofolate + H2O = (6R)-10-formyltetrahydrofolate + H(+). Its pathway is one-carbon metabolism; tetrahydrofolate interconversion. Its function is as follows. Catalyzes the oxidation of 5,10-methylenetetrahydrofolate to 5,10-methenyltetrahydrofolate and then the hydrolysis of 5,10-methenyltetrahydrofolate to 10-formyltetrahydrofolate. This is Bifunctional protein FolD from Nitrosococcus oceani (strain ATCC 19707 / BCRC 17464 / JCM 30415 / NCIMB 11848 / C-107).